We begin with the raw amino-acid sequence, 545 residues long: Chaperonin GroEL (545 aa).

Residues 30–33 (TLGP), K51, 87–91 (DGTTT), G415, and D496 contribute to the ATP site.

It belongs to the chaperonin (HSP60) family. As to quaternary structure, forms a cylinder of 14 subunits composed of two heptameric rings stacked back-to-back. Interacts with the co-chaperonin GroES.

The protein resides in the cytoplasm. The catalysed reaction is ATP + H2O + a folded polypeptide = ADP + phosphate + an unfolded polypeptide.. Together with its co-chaperonin GroES, plays an essential role in assisting protein folding. The GroEL-GroES system forms a nano-cage that allows encapsulation of the non-native substrate proteins and provides a physical environment optimized to promote and accelerate protein folding. In Chlorobaculum tepidum (strain ATCC 49652 / DSM 12025 / NBRC 103806 / TLS) (Chlorobium tepidum), this protein is Chaperonin GroEL.